We begin with the raw amino-acid sequence, 503 residues long: Maturase K (503 aa).

This sequence belongs to the intron maturase 2 family. MatK subfamily.

It localises to the plastid. Its subcellular location is the chloroplast. Usually encoded in the trnK tRNA gene intron. Probably assists in splicing its own and other chloroplast group II introns. The chain is Maturase K from Rhamnus cathartica (Common buckthorn).